Reading from the N-terminus, the 142-residue chain is Gonadotropin subunit beta-2 (142 aa).

Positions 1–23 are cleaved as a signal peptide; that stretch reads MLGLHVGTLISLFLCILLEPVEG. Disulfide bonds link C29/C77, C43/C92, C46/C130, C54/C108, C58/C110, and C113/C120. N-linked (GlcNAc...) asparagine glycosylation occurs at N33.

Belongs to the glycoprotein hormones subunit beta family. As to quaternary structure, heterodimer of an alpha and a beta chain.

Its subcellular location is the secreted. In terms of biological role, involved in gametogenesis and steroidogenesis. This is Gonadotropin subunit beta-2 (cgbb) from Oncorhynchus keta (Chum salmon).